The following is a 499-amino-acid chain: Putative DUF21 domain-containing protein At1g03270 (499 aa).

Topologically, residues 1 to 32 (MVVLSTLALVRAAYSLNSFVFEAEDIRFGSPW) are extracellular. In terms of domain architecture, CNNM transmembrane spans 29 to 211 (GSPWWFVVVG…GKGGELTHEE (183 aa)). A helical transmembrane segment spans residues 33-53 (WFVVVGVACFLVLFAGIMSGL). Residues 54-91 (TLGLMSLGLVELEILQQSGSSAEKKQAAAILPVVKKQH) lie on the Cytoplasmic side of the membrane. A helical membrane pass occupies residues 92–112 (QLLVTLLLCNAAAMEALPICL). At 113–114 (DK) the chain is on the extracellular side. Residues 115 to 135 (IFHPFVAVLLSVTFVLAFGEI) form a helical membrane-spanning segment. Residues 136–145 (IPQAICSRYG) lie on the Cytoplasmic side of the membrane. A helical membrane pass occupies residues 146-166 (LAVGANFLWLVRILMIICYPI). Topologically, residues 167–499 (AYPIGKVLDA…TEPLLAESDR (333 aa)) are extracellular. Asn181 is a glycosylation site (N-linked (GlcNAc...) asparagine). 3 consecutive CBS domains span residues 230 to 291 (MTPI…EAPV), 295 to 359 (SIRK…SNLT), and 365 to 431 (HESH…IVDE). Asn357, Asn391, and Asn484 each carry an N-linked (GlcNAc...) asparagine glycan.

It is found in the membrane. The protein is Putative DUF21 domain-containing protein At1g03270 (CBSDUF4) of Arabidopsis thaliana (Mouse-ear cress).